We begin with the raw amino-acid sequence, 118 residues long: UPF0102 protein Swit_0572 (118 aa).

Belongs to the UPF0102 family.

This chain is UPF0102 protein Swit_0572, found in Rhizorhabdus wittichii (strain DSM 6014 / CCUG 31198 / JCM 15750 / NBRC 105917 / EY 4224 / RW1) (Sphingomonas wittichii).